Here is an 855-residue protein sequence, read N- to C-terminus: Lon protease (855 aa).

The Lon N-terminal domain maps to 45 to 288 (IYLLTVKNVV…ETFRFLNIEY (244 aa)). 439-446 (GPPGVGKT) provides a ligand contact to ATP. A Lon proteolytic domain is found at 674–855 (IQVPGVVTGL…NEVIDLSIIK (182 aa)). Active-site residues include serine 761 and lysine 804.

The protein belongs to the peptidase S16 family. As to quaternary structure, homohexamer. Organized in a ring with a central cavity.

It is found in the cytoplasm. The enzyme catalyses Hydrolysis of proteins in presence of ATP.. Its function is as follows. ATP-dependent serine protease that mediates the selective degradation of mutant and abnormal proteins as well as certain short-lived regulatory proteins. Required for cellular homeostasis and for survival from DNA damage and developmental changes induced by stress. Degrades polypeptides processively to yield small peptide fragments that are 5 to 10 amino acids long. Binds to DNA in a double-stranded, site-specific manner. The chain is Lon protease from Karelsulcia muelleri (strain GWSS) (Sulcia muelleri).